Reading from the N-terminus, the 749-residue chain is Patatin-like phospholipase domain-containing protein AN0408 (749 aa).

A compositionally biased stretch (basic and acidic residues) spans 1–11 (MEKSAAGDNID). Residues 1 to 21 (MEKSAAGDNIDKYSPSSIPDY) are disordered. A helical transmembrane segment spans residues 92–112 (WPFLLFVLGWITFLSVGYALT). The region spanning 280-471 (LCLSGGATFA…RTDIPIKALN (192 aa)) is the PNPLA domain. A GXSXG motif is present at residues 311-315 (GTSGG). Ser313 serves as the catalytic Nucleophile. Asp458 (proton acceptor) is an active-site residue. The interval 630-659 (SIQPFPFDNGAAGADQKSNDPREERLNRNF) is disordered. Basic and acidic residues predominate over residues 646-659 (KSNDPREERLNRNF).

Belongs to the PLPL family.

It is found in the membrane. Its function is as follows. Probable lipid hydrolase. The polypeptide is Patatin-like phospholipase domain-containing protein AN0408 (Emericella nidulans (strain FGSC A4 / ATCC 38163 / CBS 112.46 / NRRL 194 / M139) (Aspergillus nidulans)).